We begin with the raw amino-acid sequence, 1915 residues long: Methylcytosine dioxygenase tet3-B (1915 aa).

The segment at 28–49 is disordered; that stretch reads RLRVSEMPSELNGGGDGSKGDG. A CXXC-type zinc finger spans residues 61–102; the sequence is SNKKRKRCGVCVPCLRKEPCGTCYNCVNRSTSHQICKMRKCE. Residues Cys-68, Cys-71, Cys-74, Cys-80, Cys-83, Cys-86, Cys-96, and Cys-101 each coordinate Zn(2+). Over residues 629-638 the composition is skewed to polar residues; it reads PNSQQAPVSK. Disordered regions lie at residues 629–679, 776–806, and 831–880; these read PNSQ…RVKE, GRCP…VPGQ, and FSLP…LSNN. Over residues 664–676 the composition is skewed to basic residues; the sequence is KPPRKQVQIKKPR. The segment covering 779-793 has biased composition (low complexity); sequence PTPSTGDSSSGQGDS. Polar residues-rich tracts occupy residues 838–854 and 864–880; these read VPSQ…TSGV and QLPS…LSNN. Residues Cys-974, Cys-976, Cys-1034, His-1060, and Cys-1062 each coordinate Zn(2+). Arg-1102 lines the 2-oxoglutarate pocket. Positions 1112, 1114, 1130, 1139, and 1199 each coordinate Zn(2+). Cys-1215 contributes to the 2-oxoglutarate binding site. Zn(2+) is bound at residue His-1221. The Fe cation site is built by His-1223 and Asp-1225. His-1257 contributes to the 2-oxoglutarate binding site. Disordered regions lie at residues 1298 to 1356, 1469 to 1516, and 1719 to 1753; these read LSEP…QTKP, GMNQ…APME, and PAVN…VKEE. Over residues 1308–1339 the composition is skewed to basic and acidic residues; it reads RQLDAKKATAEKKKLQKEKLVSPDKTKQEPSD. Residues 1340–1355 show a composition bias toward polar residues; it reads TKTCQQNPGVPQQQTK. Residues 1482 to 1491 are compositionally biased toward basic and acidic residues; sequence NYRRSSEVPH. Composition is skewed to polar residues over residues 1494-1503 and 1720-1732; these read SLQNSNSQKS and AVNS…SQNH. His-1794 serves as a coordination point for Fe cation. A 2-oxoglutarate-binding site is contributed by 1809–1811; that stretch reads RIS. The stretch at 1827-1860 forms a coiled coil; it reads LALWEAKMKQLAERARVKEEEAAKLGIKQEVKSL.

The protein belongs to the TET family. It depends on Fe(2+) as a cofactor. Zn(2+) is required as a cofactor. As to expression, detected in embryo (at protein level). Detected in embryonic head, in developing brain and eye.

It localises to the nucleus. Its subcellular location is the chromosome. It carries out the reaction a 5-methyl-2'-deoxycytidine in DNA + 2-oxoglutarate + O2 = a 5-hydroxymethyl-2'-deoxycytidine in DNA + succinate + CO2. The enzyme catalyses a 5-hydroxymethyl-2'-deoxycytidine in DNA + 2-oxoglutarate + O2 = a 5-formyl-2'-deoxycytidine in DNA + succinate + CO2 + H2O. The catalysed reaction is a 5-formyl-2'-deoxycytidine in DNA + 2-oxoglutarate + O2 = a 5-carboxyl-2'-deoxycytidine in DNA + succinate + CO2 + H(+). In terms of biological role, dioxygenase that catalyzes the conversion of the modified genomic base 5-methylcytosine (5mC) into 5-hydroxymethylcytosine (5hmC) and plays a key role in epigenetic chromatin reprogramming during embryonic development. Conversion of 5mC into 5hmC probably constitutes the first step in cytosine demethylation. Selectively binds to the promoter region of target genes and contributes to regulate the expression of numerous developmental genes, including pax6, rax, sox9 and six3. May also contribute to the regulation of target genes in ways that do not require its enzyme activity. The chain is Methylcytosine dioxygenase tet3-B from Xenopus laevis (African clawed frog).